A 544-amino-acid polypeptide reads, in one-letter code: Ceramide glucosyltransferase (544 aa).

Residues 1–15 (MVQEELSLFRITTGY) lie on the Lumenal side of the membrane. Residues 16–36 (FFLLWYIIILVAAYSGFFEIL) form a helical membrane-spanning segment. Residues 37–427 (FNFRNRPILH…LATLIEPTTE (391 aa)) are Cytoplasmic-facing. Position 109 (Asp-109) is a short sequence motif, D1. Asp-171 is a short sequence motif (D2). Position 364 (Asp-364) is a short sequence motif, D3. Residue Asp-364 is the Proton acceptor of the active site. The short motif at 404 to 408 (RRVRW) is the (Q/R)XXRW element. A helical transmembrane segment spans residues 428 to 448 (SIICGIYGTYAISTVFFGTWF). Residues 449 to 451 (NKY) lie on the Lumenal side of the membrane. The helical transmembrane segment at 452-472 (WFVMHMLIWMLTDYVQYHTLI) threads the bilayer. The Cytoplasmic segment spans residues 473–501 (NHTLDVKNITYLPNWLNESIPPKQRNCLQ). A helical transmembrane segment spans residues 502-522 (WGYIWILRELLALPIWIIAMI). Over 523 to 544 (GHEIDWRGRPFRIKKDLTAEEM) the chain is Lumenal.

The protein belongs to the glycosyltransferase 2 family.

The protein resides in the golgi apparatus membrane. It catalyses the reaction an N-acylsphing-4-enine + UDP-alpha-D-glucose = a beta-D-glucosyl-(1&lt;-&gt;1')-N-acylsphing-4-enine + UDP + H(+). It participates in lipid metabolism; sphingolipid metabolism. Catalyzes the final step in the biosynthesis of the membrane lipid glucosylceramide (GluCer), the transfer of glucose to ceramide. Glucosylceramides play important roles in growth, differentiation and pathogenicity. This Candida albicans (strain SC5314 / ATCC MYA-2876) (Yeast) protein is Ceramide glucosyltransferase.